A 588-amino-acid polypeptide reads, in one-letter code: Aspartate--tRNA ligase (588 aa).

L-aspartate is bound at residue Glu177. The aspartate stretch occupies residues 201 to 204 (QLFK). Residue Arg223 participates in L-aspartate binding. Residues 223-225 (RDE) and Gln232 each bind ATP. Position 451 (His451) interacts with L-aspartate. Glu485 is an ATP binding site. Arg492 contributes to the L-aspartate binding site. Residue 537–540 (GLDR) participates in ATP binding.

The protein belongs to the class-II aminoacyl-tRNA synthetase family. Type 1 subfamily. In terms of assembly, homodimer.

The protein resides in the cytoplasm. The catalysed reaction is tRNA(Asp) + L-aspartate + ATP = L-aspartyl-tRNA(Asp) + AMP + diphosphate. Its function is as follows. Catalyzes the attachment of L-aspartate to tRNA(Asp) in a two-step reaction: L-aspartate is first activated by ATP to form Asp-AMP and then transferred to the acceptor end of tRNA(Asp). The polypeptide is Aspartate--tRNA ligase (Staphylococcus aureus (strain Newman)).